A 304-amino-acid polypeptide reads, in one-letter code: tRNA dimethylallyltransferase (304 aa).

An ATP-binding site is contributed by 10–17; the sequence is GPTASGKT. 12–17 contributes to the substrate binding site; that stretch reads TASGKT. Interaction with substrate tRNA stretches follow at residues 35-38, 159-163, and 240-245; these read DSAL, QRLSR, and RCVGYR.

This sequence belongs to the IPP transferase family. As to quaternary structure, monomer. The cofactor is Mg(2+).

It catalyses the reaction adenosine(37) in tRNA + dimethylallyl diphosphate = N(6)-dimethylallyladenosine(37) in tRNA + diphosphate. Catalyzes the transfer of a dimethylallyl group onto the adenine at position 37 in tRNAs that read codons beginning with uridine, leading to the formation of N6-(dimethylallyl)adenosine (i(6)A). This Shewanella putrefaciens (strain CN-32 / ATCC BAA-453) protein is tRNA dimethylallyltransferase.